Here is a 297-residue protein sequence, read N- to C-terminus: MRIAVIGAGKWGSALHLALKENHNCFISSLHQRDLEDFVSIKEALECEYLVFALSSQGMRAWLKENFINKGQKILIASKGIEDQSCQFLDEIFLDFVPKENFCVLSGPSFAAEVMQKLPTALMISGINQELCKKFASFFPDFIKTYIDNDVRGAEICGAYKNVLAIASGISDGLKLGNNARAALISRGLIEMHRFGKFFGAKEETFLGLSGAGDLFLTATSVLSRNYRVGLKLAQNQKLDSILVELNEVAEGVKTAYAIEKLAKMKGIYTPIVNEVVAIFKGKSVQEATQSLLKQND.

NADPH-binding residues include tryptophan 11, arginine 33, and lysine 79. Sn-glycerol 3-phosphate is bound by residues lysine 79, glycine 107, and serine 109. NADPH is bound at residue alanine 111. Sn-glycerol 3-phosphate contacts are provided by lysine 161, aspartate 214, serine 224, arginine 225, and asparagine 226. Lysine 161 serves as the catalytic Proton acceptor. Arginine 225 is an NADPH binding site. Residues valine 249 and glutamate 251 each contribute to the NADPH site.

This sequence belongs to the NAD-dependent glycerol-3-phosphate dehydrogenase family.

It is found in the cytoplasm. The enzyme catalyses sn-glycerol 3-phosphate + NAD(+) = dihydroxyacetone phosphate + NADH + H(+). It catalyses the reaction sn-glycerol 3-phosphate + NADP(+) = dihydroxyacetone phosphate + NADPH + H(+). Its pathway is membrane lipid metabolism; glycerophospholipid metabolism. Its function is as follows. Catalyzes the reduction of the glycolytic intermediate dihydroxyacetone phosphate (DHAP) to sn-glycerol 3-phosphate (G3P), the key precursor for phospholipid synthesis. The protein is Glycerol-3-phosphate dehydrogenase [NAD(P)+] of Campylobacter jejuni subsp. jejuni serotype O:6 (strain 81116 / NCTC 11828).